The chain runs to 267 residues: 2-keto-3-deoxy-L-rhamnonate aldolase (267 aa).

The active-site Proton acceptor is H49. Position 151 (Q151) interacts with substrate. Residue E153 coordinates Mg(2+). A178 and D179 together coordinate substrate. Position 179 (D179) interacts with Mg(2+).

This sequence belongs to the HpcH/HpaI aldolase family. KDR aldolase subfamily. Homohexamer. Mg(2+) is required as a cofactor.

The catalysed reaction is 2-dehydro-3-deoxy-L-rhamnonate = (S)-lactaldehyde + pyruvate. Its function is as follows. Catalyzes the reversible retro-aldol cleavage of 2-keto-3-deoxy-L-rhamnonate (KDR) to pyruvate and lactaldehyde. The polypeptide is 2-keto-3-deoxy-L-rhamnonate aldolase (Escherichia coli (strain UTI89 / UPEC)).